We begin with the raw amino-acid sequence, 898 residues long: Neutral alpha-glucosidase C (898 aa).

Positions 154 to 173 (QRATKGNGQNTPAATSQENQ) are disordered. Polar residues predominate over residues 157 to 171 (TKGNGQNTPAATSQE). The active-site Nucleophile is D495. Residue E498 is part of the active site. The active-site Proton donor is D571.

Belongs to the glycosyl hydrolase 31 family.

It carries out the reaction Hydrolysis of terminal, non-reducing (1-&gt;4)-linked alpha-D-glucose residues with release of alpha-D-glucose.. Its function is as follows. Has alpha-glucosidase activity. The chain is Neutral alpha-glucosidase C (Ganc) from Mus musculus (Mouse).